The chain runs to 129 residues: Ribulose bisphosphate carboxylase small subunit (129 aa).

It belongs to the RuBisCO small chain family. In terms of assembly, heterohexadecamer of 8 large and 8 small subunits.

Functionally, ruBisCO catalyzes two reactions: the carboxylation of D-ribulose 1,5-bisphosphate, the primary event in carbon dioxide fixation, as well as the oxidative fragmentation of the pentose substrate. Both reactions occur simultaneously and in competition at the same active site. Although the small subunit is not catalytic it is essential for maximal activity. The protein is Ribulose bisphosphate carboxylase small subunit of Cereibacter sphaeroides (Rhodobacter sphaeroides).